The sequence spans 609 residues: Sporulation-specific protein 21 (609 aa).

Disordered regions lie at residues 1 to 50 (MDNI…LENS), 68 to 96 (PASK…DGNS), and 124 to 165 (KLDS…SIKG). A compositionally biased stretch (polar residues) spans 10–31 (MEGTSTMTVTSRSSEDSSCISN). Residues 32-43 (HEQDTDTHKDGD) show a composition bias toward basic and acidic residues. Low complexity predominate over residues 68-81 (PASKSSRSIGSMKS). Polar residues-rich tracts occupy residues 82 to 96 (NQSL…DGNS) and 127 to 136 (STGSQRSKNN). Over residues 143–159 (SSTTSQTTCSSSSSSSS) the composition is skewed to low complexity. 3 coiled-coil regions span residues 283-342 (RTKI…DNES), 357-393 (RETL…ATNF), and 424-483 (ENLT…LLIE). A disordered region spans residues 586–609 (DQKSNQNSSTPYKQSQRQVPHSIK). The span at 587-609 (QKSNQNSSTPYKQSQRQVPHSIK) shows a compositional bias: polar residues.

This sequence belongs to the MPC70 family. In terms of assembly, interacts directly with MPC54, NUD1 and SPC42. Interacts with ADY3. Interacts with ADY4. Probable component of a SPB complex composed of ADY3, SSP1, DON1, MPC54, SPO21/MPC70, NUD1 and CNM67.

It is found in the prospore membrane. It localises to the cytoplasm. The protein localises to the cytoskeleton. Its subcellular location is the spindle pole. In terms of biological role, involved in the pathway that organizes the shaping and sizing of the prospore membrane (PSM) during sporulation. May provide a meiosis-specific scaffold for the assembly of other proteins on spindle pole bodies (SPBs), and may be a limiting component for SPB formation. The sequence is that of Sporulation-specific protein 21 (SPO21) from Saccharomyces cerevisiae (strain ATCC 204508 / S288c) (Baker's yeast).